The sequence spans 187 residues: Large ribosomal subunit protein mL49 (187 aa).

The protein belongs to the mitochondrion-specific ribosomal protein mL49 family.

It is found in the mitochondrion. This is Large ribosomal subunit protein mL49 (mrpl-49) from Caenorhabditis elegans.